A 156-amino-acid chain; its full sequence is Small ribosomal subunit protein uS7 (156 aa).

This sequence belongs to the universal ribosomal protein uS7 family. In terms of assembly, part of the 30S ribosomal subunit. Contacts proteins S9 and S11.

In terms of biological role, one of the primary rRNA binding proteins, it binds directly to 16S rRNA where it nucleates assembly of the head domain of the 30S subunit. Is located at the subunit interface close to the decoding center, probably blocks exit of the E-site tRNA. This chain is Small ribosomal subunit protein uS7, found in Synechococcus sp. (strain RCC307).